The chain runs to 505 residues: Cytochrome P450 9b2 (505 aa).

Residue Cys449 coordinates heme.

The protein belongs to the cytochrome P450 family. Heme serves as cofactor.

The protein resides in the endoplasmic reticulum membrane. The protein localises to the microsome membrane. May be involved in the metabolism of insect hormones and in the breakdown of synthetic insecticides. This chain is Cytochrome P450 9b2 (Cyp9b2), found in Drosophila melanogaster (Fruit fly).